Consider the following 189-residue polypeptide: Ras-like protein 1 (189 aa).

10 to 17 (GAGGVGKS) contacts GTP. An Effector region motif is present at residues 32–40 (YDPTIEDSY). GTP contacts are provided by residues 57 to 61 (DTAGQ) and 116 to 119 (NKCD). Cysteine 186 is subject to Cysteine methyl ester. The S-geranylgeranyl cysteine moiety is linked to residue cysteine 186. Positions 187–189 (KIL) are cleaved as a propeptide — removed in mature form.

The protein belongs to the small GTPase superfamily. Ras family.

Its subcellular location is the cell membrane. It catalyses the reaction GTP + H2O = GDP + phosphate + H(+). Its activity is regulated as follows. Alternates between an inactive form bound to GDP and an active form bound to GTP. Activated by a guanine nucleotide-exchange factor (GEF) and inactivated by a GTPase-activating protein (GAP). In terms of biological role, ras proteins bind GDP/GTP and possess intrinsic GTPase activity. Plays a role in eye development by regulating cell growth, survival of postmitotic ommatidial cells and differentiation of photoreceptor cells. During larval development, mediates Ptth/tor signaling leading to the production of ecdysone, a hormone required for the initiation of metamorphosis. The polypeptide is Ras-like protein 1 (Drosophila persimilis (Fruit fly)).